We begin with the raw amino-acid sequence, 657 residues long: DNA mismatch repair protein MutL (657 aa).

This sequence belongs to the DNA mismatch repair MutL/HexB family.

This protein is involved in the repair of mismatches in DNA. It is required for dam-dependent methyl-directed DNA mismatch repair. May act as a 'molecular matchmaker', a protein that promotes the formation of a stable complex between two or more DNA-binding proteins in an ATP-dependent manner without itself being part of a final effector complex. This chain is DNA mismatch repair protein MutL, found in Streptococcus agalactiae serotype Ia (strain ATCC 27591 / A909 / CDC SS700).